A 512-amino-acid chain; its full sequence is GMP synthase [glutamine-hydrolyzing] (512 aa).

The Glutamine amidotransferase type-1 domain occupies 7–197; the sequence is TIIVLDFGSQ…VFGVCGCSEG (191 aa). The active-site Nucleophile is Cys84. Residues His171 and Glu173 contribute to the active site. In terms of domain architecture, GMPS ATP-PPase spans 198-387; sequence WNMENFIEVE…LGIPDEIVWR (190 aa). ATP is bound at residue 225–231; that stretch reads SGGVDSS.

In terms of assembly, homodimer.

The enzyme catalyses XMP + L-glutamine + ATP + H2O = GMP + L-glutamate + AMP + diphosphate + 2 H(+). It participates in purine metabolism; GMP biosynthesis; GMP from XMP (L-Gln route): step 1/1. Catalyzes the synthesis of GMP from XMP. This Bacillus cereus (strain G9842) protein is GMP synthase [glutamine-hydrolyzing].